Reading from the N-terminus, the 255-residue chain is Putative glutamine amidotransferase YafJ (255 aa).

C2 (for GATase activity) is an active-site residue. Positions 2–251 (CELLGMSANV…PGEWRLFCLG (250 aa)) constitute a Glutamine amidotransferase type-2 domain.

This chain is Putative glutamine amidotransferase YafJ (yafJ), found in Escherichia coli (strain K12).